A 109-amino-acid chain; its full sequence is uncharacterized protein (109 aa).

This sequence to A.fulgidus AF1885.

This is an uncharacterized protein from Methanocaldococcus jannaschii (strain ATCC 43067 / DSM 2661 / JAL-1 / JCM 10045 / NBRC 100440) (Methanococcus jannaschii).